The primary structure comprises 377 residues: Putative glutamate--cysteine ligase 2 (377 aa).

It belongs to the glutamate--cysteine ligase type 2 family. YbdK subfamily.

The catalysed reaction is L-cysteine + L-glutamate + ATP = gamma-L-glutamyl-L-cysteine + ADP + phosphate + H(+). ATP-dependent carboxylate-amine ligase which exhibits weak glutamate--cysteine ligase activity. The chain is Putative glutamate--cysteine ligase 2 from Chromobacterium violaceum (strain ATCC 12472 / DSM 30191 / JCM 1249 / CCUG 213 / NBRC 12614 / NCIMB 9131 / NCTC 9757 / MK).